The following is a 264-amino-acid chain: Tryptophan synthase alpha chain (264 aa).

Active-site proton acceptor residues include Glu-49 and Asp-60.

This sequence belongs to the TrpA family. As to quaternary structure, tetramer of two alpha and two beta chains.

It carries out the reaction (1S,2R)-1-C-(indol-3-yl)glycerol 3-phosphate + L-serine = D-glyceraldehyde 3-phosphate + L-tryptophan + H2O. The protein operates within amino-acid biosynthesis; L-tryptophan biosynthesis; L-tryptophan from chorismate: step 5/5. The alpha subunit is responsible for the aldol cleavage of indoleglycerol phosphate to indole and glyceraldehyde 3-phosphate. This chain is Tryptophan synthase alpha chain, found in Lachnospira eligens (strain ATCC 27750 / DSM 3376 / VPI C15-48 / C15-B4) (Eubacterium eligens).